The primary structure comprises 183 residues: Glutathione-regulated potassium-efflux system ancillary protein KefG (183 aa).

This sequence belongs to the NAD(P)H dehydrogenase (quinone) family. KefG subfamily. As to quaternary structure, interacts with KefB.

It localises to the cell inner membrane. The catalysed reaction is a quinone + NADH + H(+) = a quinol + NAD(+). It carries out the reaction a quinone + NADPH + H(+) = a quinol + NADP(+). Its function is as follows. Regulatory subunit of a potassium efflux system that confers protection against electrophiles. Required for full activity of KefB. The protein is Glutathione-regulated potassium-efflux system ancillary protein KefG of Salmonella paratyphi B (strain ATCC BAA-1250 / SPB7).